A 443-amino-acid polypeptide reads, in one-letter code: MKLRFAPSPTGLIHVGNARQAIANALYARRHGGTFQLRIDDTDRERSRDEYVDALHTDLAWLGITWDETFRQSDRLDRYAAAIETLKASGRLYPCFESEQELASKREARIRMRKPPIYDRAMLRMTAEQRAQAEANGKVPYWRFRLSDQDRGVDDMVMGRSQVKLQSISDPVLVRADGTVLYTLASVVDDMETGVTHVLRGEDHLTNTGVQIDIAEALGGKVGQFAFAHLPLLLDEAGGKLSKRFDGLSIRALRQDGIDPVAIVSYLARLGSADDPAPLSFDDLAASYDVRRVSRSAARFDMRQLLALNRRVMHQMPFGAIRDRLPEGATEAFWMAVRGNVDMVSELRHWWDVVGGVIVPPVQDDEGAYLLQALALLPPEPWDAQTWKDWTTAVRDATGRSGKSVFHPLRVALTGEEEGPEMRDLLPLMGHDRVAERLRIAAR.

The short motif at 7 to 17 is the 'HIGH' region element; sequence PSPTGLIHVGN. Residues 240–244 carry the 'KMSKS' region motif; that stretch reads KLSKR. Lys-243 serves as a coordination point for ATP.

Belongs to the class-I aminoacyl-tRNA synthetase family. Glutamate--tRNA ligase type 1 subfamily. Monomer.

The protein localises to the cytoplasm. It carries out the reaction tRNA(Glu) + L-glutamate + ATP = L-glutamyl-tRNA(Glu) + AMP + diphosphate. Functionally, catalyzes the attachment of glutamate to tRNA(Glu) in a two-step reaction: glutamate is first activated by ATP to form Glu-AMP and then transferred to the acceptor end of tRNA(Glu). The sequence is that of Glutamate--tRNA ligase 2 from Gluconacetobacter diazotrophicus (strain ATCC 49037 / DSM 5601 / CCUG 37298 / CIP 103539 / LMG 7603 / PAl5).